Reading from the N-terminus, the 437-residue chain is NADH-ubiquinone oxidoreductase chain 4 (437 aa).

The next 13 helical transmembrane spans lie at 8–28, 50–70, 78–98, 100–120, 132–152, 177–197, 212–232, 239–259, 266–286, 297–317, 324–344, 361–381, and 417–437; these read GASICLFPFWEVTMLTLAFII, LTPIGTALIFLTLMVTLLVLI, YKYIGCLSSLNLVLMMAFCVC, FLTFYVMFEVSLIPTLLLILL, FYLMLYTVTASLPLLLLLLYL, LVGLMMAFLVKLPIYTCHLWL, LAGVLLKLGGYGLYMLINFII, VISVIITLSLWGAVIASIICI, ALVAYSSVAHMSLVSAGILMM, TMIAHGYTSSALFVLANLSYL, LMFMKGLLAIFPAMAFYWFLF, LLIIPSMYIASYMLLILMCII, and HVLTAHLLPTFILLIPQLFSV.

It belongs to the complex I subunit 4 family.

It localises to the mitochondrion membrane. The enzyme catalyses a ubiquinone + NADH + 5 H(+)(in) = a ubiquinol + NAD(+) + 4 H(+)(out). Its function is as follows. Core subunit of the mitochondrial membrane respiratory chain NADH dehydrogenase (Complex I) that is believed to belong to the minimal assembly required for catalysis. Complex I functions in the transfer of electrons from NADH to the respiratory chain. The immediate electron acceptor for the enzyme is believed to be ubiquinone. This is NADH-ubiquinone oxidoreductase chain 4 (ND4) from Albinaria caerulea (Land snail).